A 178-amino-acid polypeptide reads, in one-letter code: Cysteine protease inhibitor 7 (178 aa).

2 disulfides stabilise this stretch: cysteine 41–cysteine 93 and cysteine 141–cysteine 147.

It belongs to the protease inhibitor I3 (leguminous Kunitz-type inhibitor) family.

The protein resides in the vacuole. Inhibitor of cysteine proteases. May protect the plant by inhibiting proteases of invading organisms. This is Cysteine protease inhibitor 7 from Solanum tuberosum (Potato).